Consider the following 92-residue polypeptide: Probable Fe(2+)-trafficking protein (92 aa).

The protein belongs to the Fe(2+)-trafficking protein family.

In terms of biological role, could be a mediator in iron transactions between iron acquisition and iron-requiring processes, such as synthesis and/or repair of Fe-S clusters in biosynthetic enzymes. This Shewanella piezotolerans (strain WP3 / JCM 13877) protein is Probable Fe(2+)-trafficking protein.